The chain runs to 302 residues: tRNA dimethylallyltransferase (302 aa).

8 to 15 (GSSGSGKS) lines the ATP pocket. 10–15 (SGSGKS) contacts substrate. An interaction with substrate tRNA region spans residues 33 to 36 (DSLS).

This sequence belongs to the IPP transferase family. Monomer. The cofactor is Mg(2+).

The catalysed reaction is adenosine(37) in tRNA + dimethylallyl diphosphate = N(6)-dimethylallyladenosine(37) in tRNA + diphosphate. Functionally, catalyzes the transfer of a dimethylallyl group onto the adenine at position 37 in tRNAs that read codons beginning with uridine, leading to the formation of N6-(dimethylallyl)adenosine (i(6)A). This chain is tRNA dimethylallyltransferase, found in Helicobacter hepaticus (strain ATCC 51449 / 3B1).